Here is a 542-residue protein sequence, read N- to C-terminus: Putative CTP synthase (542 aa).

Residues 1–277 form an amidoligase domain region; it reads MEIDLMKHIQ…HKTILDFFSL (277 aa). Ser23 is a CTP binding site. Ser23 is a binding site for UTP. Residues 24-29 and Asp81 each bind ATP; that span reads SLGKGV. 2 residues coordinate Mg(2+): Asp81 and Glu151. Residues 158-160, 198-203, and Lys234 contribute to the CTP site; these read DIE and KTKPTQ. Residues 198–203 and Lys234 contribute to the UTP site; that span reads KTKPTQ. Residues 310–542 enclose the Glutamine amidotransferase type-1 domain; the sequence is YVELPDAYKS…LKMSLKIKES (233 aa). Glu517 is an active-site residue.

The protein belongs to the CTP synthase family. Homotetramer.

The catalysed reaction is UTP + L-glutamine + ATP + H2O = CTP + L-glutamate + ADP + phosphate + 2 H(+). The enzyme catalyses L-glutamine + H2O = L-glutamate + NH4(+). It catalyses the reaction UTP + NH4(+) + ATP = CTP + ADP + phosphate + 2 H(+). Its pathway is pyrimidine metabolism; CTP biosynthesis via de novo pathway; CTP from UDP: step 2/2. With respect to regulation, allosterically activated by GTP, when glutamine is the substrate; GTP has no effect on the reaction when ammonia is the substrate. The allosteric effector GTP functions by stabilizing the protein conformation that binds the tetrahedral intermediate(s) formed during glutamine hydrolysis. Inhibited by the product CTP, via allosteric rather than competitive inhibition. Catalyzes the ATP-dependent amination of UTP to CTP with either L-glutamine or ammonia as the source of nitrogen. Regulates intracellular CTP levels through interactions with the four ribonucleotide triphosphates. This chain is Putative CTP synthase, found in Ureaplasma parvum serovar 3 (strain ATCC 700970).